A 446-amino-acid chain; its full sequence is Eukaryotic translation initiation factor 3 subunit E (446 aa).

The PCI domain occupies proline 240–serine 420.

The protein belongs to the eIF-3 subunit E family. In terms of assembly, component of the eukaryotic translation initiation factor 3 (eIF-3) complex.

The protein resides in the cytoplasm. In terms of biological role, component of the eukaryotic translation initiation factor 3 (eIF-3) complex, which is involved in protein synthesis of a specialized repertoire of mRNAs and, together with other initiation factors, stimulates binding of mRNA and methionyl-tRNAi to the 40S ribosome. The eIF-3 complex specifically targets and initiates translation of a subset of mRNAs involved in cell proliferation. The sequence is that of Eukaryotic translation initiation factor 3 subunit E from Pyricularia oryzae (strain 70-15 / ATCC MYA-4617 / FGSC 8958) (Rice blast fungus).